We begin with the raw amino-acid sequence, 278 residues long: Phosphonates import ATP-binding protein PhnC (278 aa).

The ABC transporter domain maps to 25 to 273; the sequence is LAVKGLVKAY…IIQDIYSDES (249 aa). 58-65 contributes to the ATP binding site; sequence GRSGAGKS.

This sequence belongs to the ABC transporter superfamily. Phosphonates importer (TC 3.A.1.9.1) family. As to quaternary structure, the complex is composed of two ATP-binding proteins (PhnC), two transmembrane proteins (PhnE) and a solute-binding protein (PhnD).

Its subcellular location is the cell inner membrane. It catalyses the reaction phosphonate(out) + ATP + H2O = phosphonate(in) + ADP + phosphate + H(+). Part of the ABC transporter complex PhnCDE involved in phosphonates import. Responsible for energy coupling to the transport system. The chain is Phosphonates import ATP-binding protein PhnC from Yersinia pestis bv. Antiqua (strain Antiqua).